The sequence spans 180 residues: Acireductone dioxygenase (180 aa).

Fe(2+)-binding residues include His99, His101, Glu105, and His145. Ni(2+)-binding residues include His99, His101, Glu105, and His145.

This sequence belongs to the acireductone dioxygenase (ARD) family. In terms of assembly, monomer. Fe(2+) serves as cofactor. Requires Ni(2+) as cofactor.

It catalyses the reaction 1,2-dihydroxy-5-(methylsulfanyl)pent-1-en-3-one + O2 = 3-(methylsulfanyl)propanoate + CO + formate + 2 H(+). The catalysed reaction is 1,2-dihydroxy-5-(methylsulfanyl)pent-1-en-3-one + O2 = 4-methylsulfanyl-2-oxobutanoate + formate + 2 H(+). Its pathway is amino-acid biosynthesis; L-methionine biosynthesis via salvage pathway; L-methionine from S-methyl-5-thio-alpha-D-ribose 1-phosphate: step 5/6. Catalyzes 2 different reactions between oxygen and the acireductone 1,2-dihydroxy-3-keto-5-methylthiopentene (DHK-MTPene) depending upon the metal bound in the active site. Fe-containing acireductone dioxygenase (Fe-ARD) produces formate and 2-keto-4-methylthiobutyrate (KMTB), the alpha-ketoacid precursor of methionine in the methionine recycle pathway. Ni-containing acireductone dioxygenase (Ni-ARD) produces methylthiopropionate, carbon monoxide and formate, and does not lie on the methionine recycle pathway. The polypeptide is Acireductone dioxygenase (Geobacillus thermodenitrificans (strain NG80-2)).